Reading from the N-terminus, the 510-residue chain is 2-isopropylmalate synthase (510 aa).

In terms of domain architecture, Pyruvate carboxyltransferase spans 5–267 (LVIFDTTLRD…DTRIDTTQIV (263 aa)). D14, H202, H204, and N238 together coordinate Mn(2+). The segment at 392–510 (RLLSLVAHSE…SSLERTHPQV (119 aa)) is regulatory domain.

The protein belongs to the alpha-IPM synthase/homocitrate synthase family. LeuA type 1 subfamily. Homodimer. Mn(2+) serves as cofactor.

The protein localises to the cytoplasm. It carries out the reaction 3-methyl-2-oxobutanoate + acetyl-CoA + H2O = (2S)-2-isopropylmalate + CoA + H(+). Its pathway is amino-acid biosynthesis; L-leucine biosynthesis; L-leucine from 3-methyl-2-oxobutanoate: step 1/4. In terms of biological role, catalyzes the condensation of the acetyl group of acetyl-CoA with 3-methyl-2-oxobutanoate (2-ketoisovalerate) to form 3-carboxy-3-hydroxy-4-methylpentanoate (2-isopropylmalate). The protein is 2-isopropylmalate synthase of Nitrosomonas eutropha (strain DSM 101675 / C91 / Nm57).